The primary structure comprises 223 residues: Virulence transcriptional regulatory protein PhoP (223 aa).

The region spanning 2–116 is the Response regulatory domain; it reads RVLVVEDNAL…EVMARMQALM (115 aa). The residue at position 51 (D51) is a 4-aspartylphosphate. Residues 124 to 222 constitute a DNA-binding region (ompR/PhoB-type); sequence SQVISLPPFQ…VRGQGYLFEL (99 aa).

In terms of processing, phosphorylated by PhoQ.

It localises to the cytoplasm. Member of the two-component regulatory system PhoQ/PhoP involved in virulence and adaptation to low Mg(2+) environments. Necessary for resistance to killing by polymorphonuclear leukocytes (PMNs) and cationic antimicrobial peptides (CAMP) they produce. This is Virulence transcriptional regulatory protein PhoP (phoP) from Shigella flexneri.